Here is a 269-residue protein sequence, read N- to C-terminus: Energy-coupling factor transporter ATP-binding protein EcfA1 (269 aa).

The 235-residue stretch at 8–242 folds into the ABC transporter domain; that stretch reads IVFKNVSFQY…AEELTTIGLD (235 aa). 42-49 contacts ATP; it reads GHNGSGKS.

This sequence belongs to the ABC transporter superfamily. Energy-coupling factor EcfA family. Forms a stable energy-coupling factor (ECF) transporter complex composed of 2 membrane-embedded substrate-binding proteins (S component), 2 ATP-binding proteins (A component) and 2 transmembrane proteins (T component).

Its subcellular location is the cell membrane. In terms of biological role, ATP-binding (A) component of a common energy-coupling factor (ECF) ABC-transporter complex. Unlike classic ABC transporters this ECF transporter provides the energy necessary to transport a number of different substrates. This Staphylococcus aureus (strain MRSA252) protein is Energy-coupling factor transporter ATP-binding protein EcfA1.